The primary structure comprises 777 residues: Biotin sulfoxide reductase (777 aa).

Mo-bis(molybdopterin guanine dinucleotide) is bound at residue Ser-148.

This sequence belongs to the prokaryotic molybdopterin-containing oxidoreductase family. It depends on Mo-bis(molybdopterin guanine dinucleotide) as a cofactor.

It carries out the reaction [thioredoxin]-disulfide + L-methionine + H2O = L-methionine (S)-S-oxide + [thioredoxin]-dithiol. This enzyme may serve as a scavenger, allowing the cell to utilize biotin sulfoxide as a biotin source. It reduces a spontaneous oxidation product of biotin, D-biotin D-sulfoxide (BSO or BDS), back to biotin. Also exhibits methionine-(S)-sulfoxide (Met-S-SO) reductase activity, acting specifically on the (S) enantiomer in the free, but not the protein-bound form. It thus plays a role in assimilation of oxidized methionines. In Escherichia coli (strain K12), this protein is Biotin sulfoxide reductase (bisC).